Reading from the N-terminus, the 419-residue chain is Imidazolonepropionase (419 aa).

Fe(3+)-binding residues include His87 and His89. Zn(2+) is bound by residues His87 and His89. 4-imidazolone-5-propanoate contacts are provided by Arg96, Tyr159, and His192. An N-formimidoyl-L-glutamate-binding site is contributed by Tyr159. His257 contributes to the Fe(3+) binding site. A Zn(2+)-binding site is contributed by His257. Gln260 provides a ligand contact to 4-imidazolone-5-propanoate. Position 332 (Asp332) interacts with Fe(3+). Position 332 (Asp332) interacts with Zn(2+). Positions 334 and 336 each coordinate N-formimidoyl-L-glutamate. 4-imidazolone-5-propanoate is bound at residue Ser337.

The protein belongs to the metallo-dependent hydrolases superfamily. HutI family. Requires Zn(2+) as cofactor. Fe(3+) serves as cofactor.

It localises to the cytoplasm. It carries out the reaction 4-imidazolone-5-propanoate + H2O = N-formimidoyl-L-glutamate. Its pathway is amino-acid degradation; L-histidine degradation into L-glutamate; N-formimidoyl-L-glutamate from L-histidine: step 3/3. Its function is as follows. Catalyzes the hydrolytic cleavage of the carbon-nitrogen bond in imidazolone-5-propanoate to yield N-formimidoyl-L-glutamate. It is the third step in the universal histidine degradation pathway. The protein is Imidazolonepropionase of Alteromonas mediterranea (strain DSM 17117 / CIP 110805 / LMG 28347 / Deep ecotype).